The primary structure comprises 45 residues: Large ribosomal subunit protein bL34 (45 aa).

Over residues 1–10 (MTQRTLGGTN) the composition is skewed to polar residues. A disordered region spans residues 1-45 (MTQRTLGGTNRKQKRTSGFRARMRTHNGRKVIQARRSKGRHRLAV). Residues 11–45 (RKQKRTSGFRARMRTHNGRKVIQARRSKGRHRLAV) are compositionally biased toward basic residues.

Belongs to the bacterial ribosomal protein bL34 family.

This Synechocystis sp. (strain ATCC 27184 / PCC 6803 / Kazusa) protein is Large ribosomal subunit protein bL34 (rpmH).